A 480-amino-acid chain; its full sequence is Acetylxylan esterase (480 aa).

Residues 1–19 (MNRKLFMTGLLMLAMTMQA) form the signal peptide.

The protein belongs to the AB hydrolase superfamily.

It carries out the reaction Deacetylation of xylans and xylo-oligosaccharides.. The protein operates within glycan degradation; xylan degradation. Its function is as follows. Involved in degradation of plant cell wall polysaccharides. Is an acetyl esterase with broad substrate specificity, releasing acetic acid from acetylated xylo-oligosaccharides and acetylated xylan as well as xylose-tetraacetate, 4-O-methylumbelliferyl acetate, glucose-pentaacetate, and cephalosporin C. Appears to have greater activity on oligosaccharides than on polymeric substrates. Is also able to release acetic acid from xylo-oligosaccharides with 4-O-methylglucuronic acid side groups proximally located to O-acetyl esters. Preferentially targets xylo-oligosaccharides possessing three or more O-acetyl groups, but following their depletion it is active on the less acetylated portion of the substrate. The sequence is that of Acetylxylan esterase from Xylanibacter ruminicola (strain ATCC 19189 / DSM 19721 / CIP 105475 / JCM 8958 / 23) (Prevotella ruminicola).